Here is a 380-residue protein sequence, read N- to C-terminus: 1-deoxy-D-xylulose 5-phosphate reductoisomerase (380 aa).

Residues Thr-10, Gly-11, Ser-12, Ile-13, Gly-35, and Asn-121 each coordinate NADPH. 1-deoxy-D-xylulose 5-phosphate is bound at residue Lys-122. Residue Glu-123 coordinates NADPH. Asp-147 is a Mn(2+) binding site. Residues Ser-148, Glu-149, Ser-173, and His-196 each contribute to the 1-deoxy-D-xylulose 5-phosphate site. Position 149 (Glu-149) interacts with Mn(2+). Residue Gly-202 coordinates NADPH. 4 residues coordinate 1-deoxy-D-xylulose 5-phosphate: Ser-209, Asn-214, Lys-215, and Glu-218. Glu-218 contacts Mn(2+).

Belongs to the DXR family. Requires Mg(2+) as cofactor. The cofactor is Mn(2+).

The enzyme catalyses 2-C-methyl-D-erythritol 4-phosphate + NADP(+) = 1-deoxy-D-xylulose 5-phosphate + NADPH + H(+). It functions in the pathway isoprenoid biosynthesis; isopentenyl diphosphate biosynthesis via DXP pathway; isopentenyl diphosphate from 1-deoxy-D-xylulose 5-phosphate: step 1/6. In terms of biological role, catalyzes the NADPH-dependent rearrangement and reduction of 1-deoxy-D-xylulose-5-phosphate (DXP) to 2-C-methyl-D-erythritol 4-phosphate (MEP). This is 1-deoxy-D-xylulose 5-phosphate reductoisomerase from Lachnospira eligens (strain ATCC 27750 / DSM 3376 / VPI C15-48 / C15-B4) (Eubacterium eligens).